The primary structure comprises 194 residues: Peptidyl-tRNA hydrolase (194 aa).

Y17 contributes to the tRNA binding site. H22 functions as the Proton acceptor in the catalytic mechanism. Residues F68, N70, and N116 each coordinate tRNA.

This sequence belongs to the PTH family. In terms of assembly, monomer.

It localises to the cytoplasm. It catalyses the reaction an N-acyl-L-alpha-aminoacyl-tRNA + H2O = an N-acyl-L-amino acid + a tRNA + H(+). Functionally, hydrolyzes ribosome-free peptidyl-tRNAs (with 1 or more amino acids incorporated), which drop off the ribosome during protein synthesis, or as a result of ribosome stalling. Catalyzes the release of premature peptidyl moieties from peptidyl-tRNA molecules trapped in stalled 50S ribosomal subunits, and thus maintains levels of free tRNAs and 50S ribosomes. The protein is Peptidyl-tRNA hydrolase of Shewanella woodyi (strain ATCC 51908 / MS32).